The sequence spans 447 residues: Argininosuccinate synthase (447 aa).

ATP is bound by residues 17-25 (AFSGGLDTS) and Ala43. Tyr99 is an L-citrulline binding site. ATP is bound by residues Gly129 and Thr131. 3 residues coordinate L-aspartate: Thr131, Asn135, and Asp136. Asn135 lines the L-citrulline pocket. Residue Asp136 participates in ATP binding. L-citrulline contacts are provided by Arg139 and Ser192. Asp194 contributes to the ATP binding site. Positions 201, 203, and 280 each coordinate L-citrulline.

This sequence belongs to the argininosuccinate synthase family. Type 2 subfamily. As to quaternary structure, homotetramer.

The protein localises to the cytoplasm. The enzyme catalyses L-citrulline + L-aspartate + ATP = 2-(N(omega)-L-arginino)succinate + AMP + diphosphate + H(+). It functions in the pathway amino-acid biosynthesis; L-arginine biosynthesis; L-arginine from L-ornithine and carbamoyl phosphate: step 2/3. This chain is Argininosuccinate synthase, found in Escherichia coli (strain K12 / MC4100 / BW2952).